Reading from the N-terminus, the 590-residue chain is Bacillolysin (590 aa).

The N-terminal stretch at 1 to 24 is a signal peptide; sequence MKKVWFSLLGGAMLLGSVASGASA. A propeptide spans 25-286 (activation peptide); the sequence is ESSVSGPAQL…GSIVFQYDII (262 aa). Positions 339, 341, and 419 each coordinate Ca(2+). Histidine 423 contacts Zn(2+). The active site involves glutamate 424. Zn(2+)-binding residues include histidine 427 and glutamate 447. Positions 466, 469, 470, 473, and 476 each coordinate Ca(2+). The Proton donor role is filled by histidine 507.

The protein belongs to the peptidase M4 family. Requires Ca(2+) as cofactor. The cofactor is Zn(2+).

The protein resides in the secreted. It carries out the reaction Similar, but not identical, to that of thermolysin.. Functionally, involved in the generation of beta- and alpha-amylases from the large amylase precursor. The sequence is that of Bacillolysin (npr) from Paenibacillus polymyxa (Bacillus polymyxa).